A 241-amino-acid chain; its full sequence is Anthocyanidin 3-O-glucosyltransferase 4 (241 aa).

UDP-alpha-D-glucose contacts are provided by Q104, H119, W122, N123, S124, and E127. An an anthocyanidin-binding site is contributed by A142. UDP-alpha-D-glucose is bound by residues E143 and Q144.

The protein belongs to the UDP-glycosyltransferase family. As to expression, faintly expressed in cotyledons, roots and leaves.

The enzyme catalyses an anthocyanidin + UDP-alpha-D-glucose + H(+) = an anthocyanidin 3-O-beta-D-glucoside + UDP. Its pathway is pigment biosynthesis; anthocyanin biosynthesis. Its function is as follows. In the presence of other necessary color factors, this glycosylation reaction allows the accumulation of anthocyanin pigments. The chain is Anthocyanidin 3-O-glucosyltransferase 4 (GT4) from Manihot esculenta (Cassava).